The sequence spans 258 residues: Polysialic acid transport protein KpsM (258 aa).

Positions leucine 30–arginine 251 constitute an ABC transmembrane type-2 domain. 6 helical membrane passes run leucine 33–isoleucine 53, isoleucine 61–serine 81, alanine 110–methionine 130, valine 144–valine 164, leucine 175–isoleucine 195, and glycine 227–leucine 247.

This sequence belongs to the ABC-2 integral membrane protein family.

It localises to the cell inner membrane. Its function is as follows. KpsM and KpsT constitute a system for the transport of polysialic acid across the cytoplasmic membrane. The polypeptide is Polysialic acid transport protein KpsM (kpsM) (Escherichia coli).